A 71-amino-acid polypeptide reads, in one-letter code: Protein KleB (71 aa).

Positions 9–28 form a DNA-binding region, H-T-H motif; that stretch reads VTTNCRRCGKSISTLSRSLI.

The sequence is that of Protein KleB (kleB) from Escherichia coli.